The following is a 459-amino-acid chain: Ribulose bisphosphate carboxylase large chain (459 aa).

The residue at position 4 (Lys-4) is an N6,N6,N6-trimethyllysine. Residues Asn-113 and Thr-163 each contribute to the substrate site. Catalysis depends on Lys-165, which acts as the Proton acceptor. Residue Lys-167 participates in substrate binding. Mg(2+)-binding residues include Lys-191, Asp-193, and Glu-194. Lys-191 is modified (N6-carboxylysine). The active-site Proton acceptor is His-284. Residues Arg-285, His-317, and Ser-369 each coordinate substrate.

Belongs to the RuBisCO large chain family. Type I subfamily. In terms of assembly, heterohexadecamer of 8 large chains and 8 small chains; disulfide-linked. The disulfide link is formed within the large subunit homodimers. Requires Mg(2+) as cofactor. Post-translationally, the disulfide bond which can form in the large chain dimeric partners within the hexadecamer appears to be associated with oxidative stress and protein turnover.

It localises to the plastid. The protein resides in the chloroplast. It carries out the reaction 2 (2R)-3-phosphoglycerate + 2 H(+) = D-ribulose 1,5-bisphosphate + CO2 + H2O. It catalyses the reaction D-ribulose 1,5-bisphosphate + O2 = 2-phosphoglycolate + (2R)-3-phosphoglycerate + 2 H(+). Functionally, ruBisCO catalyzes two reactions: the carboxylation of D-ribulose 1,5-bisphosphate, the primary event in carbon dioxide fixation, as well as the oxidative fragmentation of the pentose substrate in the photorespiration process. Both reactions occur simultaneously and in competition at the same active site. The polypeptide is Ribulose bisphosphate carboxylase large chain (Garrya elliptica (Wavyleaf silktassel)).